A 173-amino-acid chain; its full sequence is Insertion element IS1397 uncharacterized 20.1 kDa protein (173 aa).

The disordered stretch occupies residues 115-135 (KSMTRSDDTHENEANMTPEEM).

It belongs to the IS150/IS1296 orfA family.

This Escherichia coli protein is Insertion element IS1397 uncharacterized 20.1 kDa protein.